A 188-amino-acid polypeptide reads, in one-letter code: Inosine triphosphate pyrophosphatase (188 aa).

An ITP-binding site is contributed by 7-12 (TGNAGK). E36 is a binding site for Mg(2+). Residues K48, 64–65 (DT), K81, 140–143 (FGWN), K163, and 168–169 (HR) each bind ITP.

It belongs to the HAM1 NTPase family. As to quaternary structure, homodimer. It depends on Mg(2+) as a cofactor. The cofactor is Mn(2+).

Its subcellular location is the cytoplasm. It is found in the nucleus. It carries out the reaction ITP + H2O = IMP + diphosphate + H(+). The catalysed reaction is dITP + H2O = dIMP + diphosphate + H(+). The enzyme catalyses XTP + H2O = XMP + diphosphate + H(+). Its function is as follows. Pyrophosphatase that hydrolyzes non-canonical purine nucleotides such as inosine triphosphate (ITP), deoxyinosine triphosphate (dITP) or xanthosine 5'-triphosphate (XTP) to their respective monophosphate derivatives. The enzyme does not distinguish between the deoxy- and ribose forms. Probably excludes non-canonical purines from RNA and DNA precursor pools, thus preventing their incorporation into RNA and DNA and avoiding chromosomal lesions. This Yarrowia lipolytica (strain CLIB 122 / E 150) (Yeast) protein is Inosine triphosphate pyrophosphatase.